The following is a 372-amino-acid chain: Enoyl-[acyl-carrier-protein] reductase, mitochondrial (372 aa).

A mitochondrion-targeting transit peptide spans 1–18 (MSFFKTAVRRFSSTSITR). Catalysis depends on tyrosine 72, which acts as the Proton donor. Residues asparagine 157, 183-186 (NSMV), 206-208 (RNR), 279-282 (FGGM), 304-306 (FWV), and lysine 365 each bind NADP(+).

This sequence belongs to the zinc-containing alcohol dehydrogenase family. Quinone oxidoreductase subfamily. Homodimer.

It localises to the mitochondrion matrix. It catalyses the reaction a 2,3-saturated acyl-[ACP] + NADP(+) = a (2E)-enoyl-[ACP] + NADPH + H(+). Catalyzes the NADPH-dependent reduction of trans-2-enoyl thioesters in mitochondrial fatty acid synthesis (fatty acid synthesis type II). Fatty acid chain elongation in mitochondria uses acyl carrier protein (ACP) as an acyl group carrier, but the enzyme accepts both ACP and CoA thioesters as substrates in vitro. Required for respiration and the maintenance of the mitochondrial compartment. This chain is Enoyl-[acyl-carrier-protein] reductase, mitochondrial (etr1), found in Schizosaccharomyces pombe (strain 972 / ATCC 24843) (Fission yeast).